Consider the following 57-residue polypeptide: UPF0391 membrane protein BRADO2787 (57 aa).

Helical transmembrane passes span 6-26 and 35-55; these read WALL…TGVS and ILFY…LTIF.

The protein belongs to the UPF0391 family.

The protein resides in the cell membrane. In Bradyrhizobium sp. (strain ORS 278), this protein is UPF0391 membrane protein BRADO2787.